Reading from the N-terminus, the 562-residue chain is Apical membrane antigen 1 (562 aa).

An N-terminal signal peptide occupies residues 1–21; it reads MNKIYCILFLSAQCLVHMGKC. Residues 22 to 484 lie on the Extracellular side of the membrane; it reads EPNQKPSRLT…QYAQGESKNQ (463 aa). N-linked (GlcNAc...) asparagine glycans are attached at residues Asn-84 and Asn-176. Cystine bridges form between Cys-94-Cys-247, Cys-162-Cys-192, Cys-208-Cys-220, Cys-265-Cys-363, Cys-282-Cys-354, Cys-388-Cys-444, Cys-432-Cys-449, and Cys-434-Cys-451. A glycan (N-linked (GlcNAc...) asparagine) is linked at Asn-226. N-linked (GlcNAc...) asparagine glycans are attached at residues Asn-405 and Asn-441. A helical membrane pass occupies residues 485-507; that stretch reads MLLIIIGITGGVCVVALASMFYF. Topologically, residues 508–562 are cytoplasmic; that stretch reads RKKAHNDKYDKMEQADGYGKPTTRKDEMLDPEASFWGEEKRASHTTPVLMEKPYY. The segment at 519-543 is disordered; sequence MEQADGYGKPTTRKDEMLDPEASFW.

Belongs to the apicomplexan parasites AMA1 family.

The protein resides in the membrane. Its function is as follows. Involved in parasite invasion of erythrocytes. This Plasmodium fragile protein is Apical membrane antigen 1 (AMA-1).